The primary structure comprises 550 residues: Chaperonin GroEL (550 aa).

ATP is bound by residues 30–33, K51, 87–91, G415, 480–482, and D496; these read TLGP, DGTTT, and NAA.

This sequence belongs to the chaperonin (HSP60) family. As to quaternary structure, forms a cylinder of 14 subunits composed of two heptameric rings stacked back-to-back. Interacts with the co-chaperonin GroES.

The protein resides in the cytoplasm. It carries out the reaction ATP + H2O + a folded polypeptide = ADP + phosphate + an unfolded polypeptide.. In terms of biological role, together with its co-chaperonin GroES, plays an essential role in assisting protein folding. The GroEL-GroES system forms a nano-cage that allows encapsulation of the non-native substrate proteins and provides a physical environment optimized to promote and accelerate protein folding. The polypeptide is Chaperonin GroEL (Variovorax paradoxus (strain S110)).